A 981-amino-acid polypeptide reads, in one-letter code: Anoctamin-3 (981 aa).

Positions 1–22 (MVHHSGSIQSFKQQKGMNISKS) are enriched in polar residues. Residues 1-33 (MVHHSGSIQSFKQQKGMNISKSEITKETSLKPS) form a disordered region. Residues 1–403 (MVHHSGSIQS…LYFAWLGWYT (403 aa)) lie on the Cytoplasmic side of the membrane. Residues 404 to 424 (GMLIPAAIVGLCVFFYGLFTM) form a helical membrane-spanning segment. 3 N-linked (GlcNAc...) asparagine glycosylation sites follow: N425, N448, and N455. The Extracellular portion of the chain corresponds to 425-469 (NNSQVSQEICKATEVFMCPLCDKNCSLQRLNDSCIYAKVTYLFDN). Residues 470-490 (GGTVFFAIFMAIWATVFLEFW) traverse the membrane as a helical segment. At 491 to 550 (KRRRSILTYTWDLIEWEEEEETLRPQFEAKYYKMEIVNPITGKPEPHQPSSDKVTRLLVS) the chain is on the cytoplasmic side. The chain crosses the membrane as a helical span at residues 551 to 571 (VSGIFFMISLVITAVFGVVVY). Residues 572-592 (RLVVMEQFASFKWNFIKQYWQ) lie on the Extracellular side of the membrane. The helical transmembrane segment at 593–613 (FATSAAAVCINFIIIMLLNLA) threads the bilayer. Residues 614–640 (YEKIAYLLTNLEYPRTESEWENSFALK) are Cytoplasmic-facing. The helical transmembrane segment at 641 to 661 (MFLFQFVNLNSSIFYIAFFLG) threads the bilayer. Topologically, residues 662–761 (RFVGHPGKYN…MDEYLEMVLQ (100 aa)) are extracellular. A helical membrane pass occupies residues 762–782 (FGFTTIFVAAFPLAPLLALLN). Residues 783–810 (NIIEIRLDAYKFVTQWRRPLPARATDIG) are Cytoplasmic-facing. The chain crosses the membrane as a helical span at residues 811–831 (IWLGILEGIGILAVITNAFVI). Residues 832 to 914 (AITSDYIPRF…QYWHILAARL (83 aa)) lie on the Extracellular side of the membrane. N866 carries an N-linked (GlcNAc...) asparagine glycan. Residues 915–935 (AFIIVFEHLVFGIKSFIAYLI) form a helical membrane-spanning segment. The Cytoplasmic segment spans residues 936-981 (PDVPKGLHDRIRREKYLVQEMMYEAELEHLQQQRRKSGQPVHHEWP).

Belongs to the anoctamin family. In terms of assembly, interacts with KCNT1/Slack. As to expression, highly expressed in the forebrain striatum.

It localises to the cell membrane. It carries out the reaction a 1,2-diacyl-sn-glycero-3-phosphocholine(in) = a 1,2-diacyl-sn-glycero-3-phosphocholine(out). It catalyses the reaction a beta-D-galactosyl-(1&lt;-&gt;1')-N-acylsphing-4-enine(out) = a beta-D-galactosyl-(1&lt;-&gt;1')-N-acylsphing-4-enine(in). Functionally, has calcium-dependent phospholipid scramblase activity; scrambles phosphatidylcholine and galactosylceramide. Seems to act as potassium channel regulator and may inhibit pain signaling; can facilitate KCNT1/Slack channel activity by promoting its full single-channel conductance at very low sodium concentrations and by increasing its sodium sensitivity. Does not exhibit calcium-activated chloride channel (CaCC) activity. The sequence is that of Anoctamin-3 (ANO3) from Homo sapiens (Human).